We begin with the raw amino-acid sequence, 287 residues long: mRNA-capping enzyme small subunit (287 aa).

In terms of assembly, heterodimer of a large and a small subunit.

Its subcellular location is the virion. The catalysed reaction is a 5'-end (5'-triphosphoguanosine)-ribonucleoside in mRNA + S-adenosyl-L-methionine = a 5'-end (N(7)-methyl 5'-triphosphoguanosine)-ribonucleoside in mRNA + S-adenosyl-L-homocysteine. Catalyzes the last reaction in the mRNA cap formation pathway. This is mRNA-capping enzyme small subunit from Sus scrofa (Pig).